The primary structure comprises 202 residues: Rho GDP-dissociation inhibitor (202 aa).

Ala2 carries the N-acetylalanine modification. Position 27 is a phosphothreonine (Thr27). Ser40 is modified (phosphoserine).

It belongs to the Rho GDI family.

It is found in the cytoplasm. Its function is as follows. Regulates the GDP/GTP exchange reaction of the Rho proteins by inhibiting the dissociation of GDP from them, and the subsequent binding of GTP to them. The sequence is that of Rho GDP-dissociation inhibitor (RDI1) from Saccharomyces cerevisiae (strain ATCC 204508 / S288c) (Baker's yeast).